A 30-amino-acid chain; its full sequence is Neurotoxin II.22.5 (30 aa).

The region spanning 1 to 30 (KEGYIVNYHTGCKYTCAKLGDNDYCLRECK) is the LCN-type CS-alpha/beta domain.

Belongs to the long (4 C-C) scorpion toxin superfamily. Sodium channel inhibitor family. Beta subfamily. Expressed by the venom gland.

It is found in the secreted. In terms of biological role, binds to sodium channels (Nav) and inhibits the inactivation of the activated channels, thereby blocking neuronal transmission. This chain is Neurotoxin II.22.5, found in Centruroides tecomanus (Scorpion).